The chain runs to 396 residues: Phosphoglycerate kinase (396 aa).

Substrate-binding positions include 21 to 23 (DLN), Arg-36, 59 to 62 (HFDR), Arg-118, and Arg-151. Residues Lys-201, Glu-323, and 353-356 (GGDT) each bind ATP.

The protein belongs to the phosphoglycerate kinase family. Monomer.

The protein resides in the cytoplasm. It carries out the reaction (2R)-3-phosphoglycerate + ATP = (2R)-3-phospho-glyceroyl phosphate + ADP. The protein operates within carbohydrate degradation; glycolysis; pyruvate from D-glyceraldehyde 3-phosphate: step 2/5. The chain is Phosphoglycerate kinase from Granulibacter bethesdensis (strain ATCC BAA-1260 / CGDNIH1).